We begin with the raw amino-acid sequence, 120 residues long: Seminal plasma protein HSP-1 (120 aa).

2 tandem repeats follow at residues 1 to 13 (DLQTTGADHSATV) and 16 to 28 (DQQLIMTKHSATV). A 2 X approximate repeats region spans residues 1–28 (DLQTTGADHSATVNPDQQLIMTKHSATV). Residues Thr5, Thr12, Thr22, and Thr27 are each glycosylated (O-linked (GalNAc...) threonine). Fibronectin type-II domains follow at residues 29-73 (TPEN…YCAA) and 74-120 (TDYA…WKYC). Cystine bridges form between Cys34/Cys58, Cys48/Cys71, Cys79/Cys105, and Cys93/Cys120.

Belongs to the seminal plasma protein family. One glycoform exists as a monomer while the other forms a heterotetramer with HSP-2 and binds heparin. Post-translationally, O-glycosylated on Thr. There are two forms of HSP-1 which probably differ in the amount of sialylation of polysaccharide. Major component of seminal plasma.

Its subcellular location is the secreted. Its function is as follows. Could enhance the fertilizing capacity of spermatozoa upon interaction with heparin-like glycosaminoglycans present in the female genital tract. This Equus caballus (Horse) protein is Seminal plasma protein HSP-1.